Here is a 748-residue protein sequence, read N- to C-terminus: Rho GTPase-activating protein 24 (748 aa).

Residues 1-20 (MEENNDSTENPQQGQGRQNA) form a disordered region. The span at 7–18 (STENPQQGQGRQ) shows a compositional bias: polar residues. The region spanning 19–125 (NAIKCGWLRK…WVKSIRRVIW (107 aa)) is the PH domain. Positions 135 to 329 (QKLEDTVRYE…VMISKHDCLF (195 aa)) constitute a Rho-GAP domain. Disordered regions lie at residues 354–476 (TMGQ…GTHS) and 582–641 (DFFG…SSNH). 2 stretches are compositionally biased toward polar residues: residues 356–374 (GQLQ…SRQC) and 382–405 (PQRS…SPKN). 8 positions are modified to phosphoserine: Ser369, Ser391, Ser396, Ser398, Ser402, Ser413, Ser415, and Ser437. The segment covering 432-476 (IVTNGSFSSSNAEGLEKTQTTPNGSLQARRSSSLKVSGTKMGTHS) has biased composition (polar residues). Residue Thr452 is modified to Phosphothreonine. Positions 600–615 (DLSHPRDYESKSDHRS) are enriched in basic and acidic residues. A compositionally biased stretch (low complexity) spans 617–641 (GGRSSRATSSSDNSETFVGNSSSNH). Residues 649-729 (SSLKQEMTKQ…KEMEQFFSTF (81 aa)) adopt a coiled-coil conformation.

As to quaternary structure, interacts with FLNA. Post-translationally, phosphorylated by ROCK, leading to activate the RacGAP activity. As to expression, isoform 1 is widely expressed with a higher level in kidney. Isoform 2 is mainly expressed in endothelial cells.

It is found in the cytoplasm. The protein resides in the cytoskeleton. The protein localises to the cell junction. It localises to the adherens junction. Its subcellular location is the focal adhesion. It is found in the cell projection. Functionally, rho GTPase-activating protein involved in cell polarity, cell morphology and cytoskeletal organization. Acts as a GTPase activator for the Rac-type GTPase by converting it to an inactive GDP-bound state. Controls actin remodeling by inactivating Rac downstream of Rho leading to suppress leading edge protrusion and promotes cell retraction to achieve cellular polarity. Able to suppress RAC1 and CDC42 activity in vitro. Overexpression induces cell rounding with partial or complete disruption of actin stress fibers and formation of membrane ruffles, lamellipodia, and filopodia. Isoform 2 is a vascular cell-specific GAP involved in modulation of angiogenesis. This Homo sapiens (Human) protein is Rho GTPase-activating protein 24 (ARHGAP24).